The following is a 984-amino-acid chain: Ephrin type-B receptor 1 (984 aa).

The first 17 residues, 1–17, serve as a signal peptide directing secretion; sequence MALDCLLLFLLASAVAA. Residues 18-540 lie on the Extracellular side of the membrane; sequence MEETLMDTRT…YKSELREQLP (523 aa). Residues 19–201 form the Eph LBD domain; sequence EETLMDTRTA…FFKKCPSIVQ (183 aa). Fibronectin type-III domains lie at 322-432 and 433-528; these read VPSG…TNQA and APST…TLTD. 3 N-linked (GlcNAc...) asparagine glycosylation sites follow: asparagine 334, asparagine 426, and asparagine 480. Residues 541–563 traverse the membrane as a helical segment; the sequence is LIAGSAAAGVVFVVSLVAISIVC. The Cytoplasmic portion of the chain corresponds to 564 to 984; it reads SRKRAYSKEA…QMNQSPSVMA (421 aa). Position 600 is a phosphotyrosine (tyrosine 600). In terms of domain architecture, Protein kinase spans 619–882; sequence VKIEEVIGAG…EIVNTLDKMI (264 aa). ATP contacts are provided by residues 625–633 and lysine 651; that span reads IGAGEFGEV. The active-site Proton acceptor is the aspartate 744. One can recognise an SAM domain in the interval 911–975; that stretch reads TAFTTVDDWL…LSSIHSMRVQ (65 aa). Tyrosine 928 carries the post-translational modification Phosphotyrosine; by autocatalysis. Residues 982 to 984 carry the PDZ-binding motif; the sequence is VMA.

Belongs to the protein kinase superfamily. Tyr protein kinase family. Ephrin receptor subfamily. In terms of assembly, heterotetramer upon binding of the ligand. The heterotetramer is composed of an ephrin dimer and a receptor dimer. Oligomerization is probably required to induce biological responses. Interacts with EPHB6; transphosphorylates EPHB6 to form an active signaling complex. Interacts with PICK1. Interacts (through Tyr-594) with NCK1 (via SH2 domain); activates the JUN cascade to regulate cell adhesion. The ligand-activated form interacts (through Tyr-928) with GRB7 and GRB10 (via SH2 domains). The ligand-activated form interacts (residues within the catalytic domain) with GRB2 (via SH2 domain). Interacts with GRB2, SHC1 and SRC; activates the MAPK/ERK cascade to regulate cell migration. Interacts with CBL; regulates receptor degradation through ubiquitination. Interacts with ACP1. Post-translationally, phosphorylated. Autophosphorylation is stimulated by the ligand EFNB1. Required for interaction with SH2 domain-containing interactors, for activation of the MAPK/ERK and JUN signaling cascades and for ubiquitination by CBL. In terms of processing, ubiquitinated; (EFNB1)ligand-induced poly- and/or multi-ubiquitination by CBL is regulated by SRC and leads to lysosomal degradation. In terms of tissue distribution, expressed in neural stem and progenitor cells in the dentate gyrus. Expressed in myogenic progenitor cells.

The protein resides in the cell membrane. It localises to the early endosome membrane. The protein localises to the cell projection. It is found in the dendrite. It carries out the reaction L-tyrosyl-[protein] + ATP = O-phospho-L-tyrosyl-[protein] + ADP + H(+). Its function is as follows. Receptor tyrosine kinase which binds promiscuously transmembrane ephrin-B family ligands residing on adjacent cells, leading to contact-dependent bidirectional signaling into neighboring cells. The signaling pathway downstream of the receptor is referred to as forward signaling while the signaling pathway downstream of the ephrin ligand is referred to as reverse signaling. Cognate/functional ephrin ligands for this receptor include EFNB1, EFNB2 and EFNB3. During nervous system development, regulates retinal axon guidance redirecting ipsilaterally ventrotemporal retinal ganglion cells axons at the optic chiasm midline. This probably requires repulsive interaction with EFNB2. In the adult nervous system together with EFNB3, regulates chemotaxis, proliferation and polarity of the hippocampus neural progenitors. In addition to its role in axon guidance also plays an important redundant role with other ephrin-B receptors in development and maturation of dendritic spines and synapse formation. May also regulate angiogenesis. More generally, may play a role in targeted cell migration and adhesion. Upon activation by EFNB1 and probably other ephrin-B ligands activates the MAPK/ERK and the JNK signaling cascades to regulate cell migration and adhesion respectively. Involved in the maintenance of the pool of satellite cells (muscle stem cells) by promoting their self-renewal and reducing their activation and differentiation. The chain is Ephrin type-B receptor 1 (Ephb1) from Mus musculus (Mouse).